The chain runs to 233 residues: Phosphatidylserine decarboxylase proenzyme (233 aa).

Catalysis depends on Ser201, which acts as the Schiff-base intermediate with substrate; via pyruvic acid. Ser201 is subject to Pyruvic acid (Ser); by autocatalysis.

The protein belongs to the phosphatidylserine decarboxylase family. PSD-A subfamily. In terms of assembly, heterodimer of a large membrane-associated beta subunit and a small pyruvoyl-containing alpha subunit. Pyruvate serves as cofactor. Is synthesized initially as an inactive proenzyme. Formation of the active enzyme involves a self-maturation process in which the active site pyruvoyl group is generated from an internal serine residue via an autocatalytic post-translational modification. Two non-identical subunits are generated from the proenzyme in this reaction, and the pyruvate is formed at the N-terminus of the alpha chain, which is derived from the carboxyl end of the proenzyme. The post-translation cleavage follows an unusual pathway, termed non-hydrolytic serinolysis, in which the side chain hydroxyl group of the serine supplies its oxygen atom to form the C-terminus of the beta chain, while the remainder of the serine residue undergoes an oxidative deamination to produce ammonia and the pyruvoyl prosthetic group on the alpha chain.

The protein resides in the cell membrane. The catalysed reaction is a 1,2-diacyl-sn-glycero-3-phospho-L-serine + H(+) = a 1,2-diacyl-sn-glycero-3-phosphoethanolamine + CO2. It functions in the pathway phospholipid metabolism; phosphatidylethanolamine biosynthesis; phosphatidylethanolamine from CDP-diacylglycerol: step 2/2. Its function is as follows. Catalyzes the formation of phosphatidylethanolamine (PtdEtn) from phosphatidylserine (PtdSer). This Mycolicibacterium vanbaalenii (strain DSM 7251 / JCM 13017 / BCRC 16820 / KCTC 9966 / NRRL B-24157 / PYR-1) (Mycobacterium vanbaalenii) protein is Phosphatidylserine decarboxylase proenzyme.